The following is a 236-amino-acid chain: Ribose-5-phosphate isomerase A (236 aa).

Substrate is bound by residues 32–35 (TGST), 87–90 (DGSD), and 100–103 (KGGG). The active-site Proton acceptor is Glu-109. Residue Lys-127 coordinates substrate.

Belongs to the ribose 5-phosphate isomerase family. As to quaternary structure, homodimer.

The enzyme catalyses aldehydo-D-ribose 5-phosphate = D-ribulose 5-phosphate. It participates in carbohydrate degradation; pentose phosphate pathway; D-ribose 5-phosphate from D-ribulose 5-phosphate (non-oxidative stage): step 1/1. Functionally, catalyzes the reversible conversion of ribose-5-phosphate to ribulose 5-phosphate. In Haloquadratum walsbyi (strain DSM 16790 / HBSQ001), this protein is Ribose-5-phosphate isomerase A.